The primary structure comprises 401 residues: Voltage-gated potassium channel subunit beta-1 (401 aa).

The NADP(+) site is built by threonine 90, tryptophan 91, glutamine 97, and aspartate 119. The Proton donor/acceptor role is filled by tyrosine 124. Asparagine 192, serine 222, arginine 223, glutamine 248, tryptophan 277, serine 278, proline 279, leucine 280, alanine 281, cysteine 282, lysine 288, arginine 298, glycine 357, serine 359, glutamine 363, glutamate 366, and asparagine 367 together coordinate NADP(+).

Belongs to the shaker potassium channel beta subunit family. As to quaternary structure, homotetramer. Interaction with tetrameric potassium channel alpha subunits gives rise to a heterooctamer.

Its subcellular location is the cytoplasm. It is found in the membrane. The protein resides in the cell membrane. The enzyme catalyses a primary alcohol + NADP(+) = an aldehyde + NADPH + H(+). The catalysed reaction is a secondary alcohol + NADP(+) = a ketone + NADPH + H(+). In terms of biological role, regulatory subunit of the voltage-gated potassium (Kv) channels composed of pore-forming and potassium-conducting alpha subunits and of regulatory beta subunits. The beta-1/KCNAB1 cytoplasmic subunit mediates closure of delayed rectifier potassium channels by physically obstructing the pore via its N-terminal domain and increases the speed of channel closure for other family members. Promotes the inactivation of KCNA1, KCNA2, KCNA4, KCNA5 and KCNA6 alpha subunit-containing channels. Displays nicotinamide adenine dinucleotide phosphate (NADPH)-dependent aldoketoreductase activity by catalyzing the NADPH-dependent reduction of a variety of endogenous aldehydes and ketones. The binding of NADPH is required for efficient down-regulation of potassium channel activity. Oxidation of the bound NADPH restrains N-terminal domain from blocking the channel, thereby decreasing N-type inactivation of potassium channel activity. The protein is Voltage-gated potassium channel subunit beta-1 (KCNAB1) of Gallus gallus (Chicken).